Reading from the N-terminus, the 95-residue chain is RING finger protein Z (95 aa).

A lipid anchor (N-myristoyl glycine; by host) is attached at glycine 2. Residues 38–74 (CKSCWFANKGLIKCSNHYLCLKCLTAMLSRSDYCGIC) form an RING-type; atypical zinc finger. The PTAP/PSAP motif signature appears at 88-91 (PSAP).

It belongs to the arenaviridae Z protein family. Interacts with protein NP; this interaction probably directs the encapsidated genome to budding sites. Interacts (via RING domain) with polymerase L; this interaction inhibits viral transcription and replication, Z partially blocks the product exit tunnel for the releasing nascent RNA product. Interacts with the glycoprotein complex; this interaction plays a role in virion budding. Interacts with host eIF4E; this interaction results in eIF4E reduced affinity for its substrate, the 5'-m7 G cap structure. Interacts (via late-budding domain) with host TSG101; this interaction is essential for budding and release of viral particles. Interacts with host RPLP0; this interaction may serve to load ribosome-like particles inside the virion. Interacts with host PML; this interaction induces PML bodies redistribution in the cytoplasm upon viral infection. In terms of processing, myristoylation is required for the role of RING finger protein Z in assembly and budding.

Its subcellular location is the virion. It localises to the host cytoplasm. The protein resides in the host perinuclear region. It is found in the host cell membrane. Plays a crucial role in virion assembly and budding. Expressed late in the virus life cycle, it acts as an inhibitor of viral transcription and RNA synthesis by interacting with the viral polymerase L. Presumably recruits the NP encapsidated genome to cellular membranes at budding sites via direct interaction with NP. Plays critical roles in the final steps of viral release by interacting with host TSG101, a member of the vacuolar protein-sorting pathway and using other cellular host proteins involved in vesicle formation pathway. The budding of the virus progeny occurs after association of protein Z with the viral glycoprotein complex SSP-GP1-GP2 at the cell periphery, step that requires myristoylation of protein Z. Also selectively represses protein production by associating with host eIF4E. In cell-based minigenome assay, has an inhibitory effect on the ribonucleoprotein machinery (vRNP), which is responsible for the replication and transcription of the viral genome. This Bear Canyon mammarenavirus (isolate Mouse/United States/AV A0070039/2000) (BCNV) protein is RING finger protein Z.